The primary structure comprises 269 residues: MAGSVLENIQSVLQKTWVREFLAEFLSTYVLMVFGLGSVAHMVLGERLGSYLGVNLGFGFGVTMGIHVAGGISGAHMNAAVTFTNCALGRMAWKKFPIYVLGQFLGSFLAAATTYLIFYGAINHYAGGELLVTGPKSTANIFATYLPEHMTLWRGFVDEVFVTGMLQLCIFAITDKLNSPALQGTEPLMIGILVCVLGVSLGMNTGYAINPSRDLPPRFFTFIAGWGKKVFSAGNNWWWVPVVAPLLGAYLGGIVYLGLIHAGIPPQGS.

The Cytoplasmic segment spans residues 1 to 20 (MAGSVLENIQSVLQKTWVRE). A Phosphoserine modification is found at Ser-4. The chain crosses the membrane as a helical span at residues 21–38 (FLAEFLSTYVLMVFGLGS). Residues 39–51 (VAHMVLGERLGSY) lie on the Extracellular side of the membrane. The helical transmembrane segment at 52–69 (LGVNLGFGFGVTMGIHVA) threads the bilayer. Residues 70–73 (GGIS) lie on the Cytoplasmic side of the membrane. The segment at residues 74 to 87 (GAHMNAAVTFTNCA) is an intramembrane region (discontinuously helical). The NPA 1 motif lies at 78–80 (NAA). Over 88–95 (LGRMAWKK) the chain is Cytoplasmic. A helical membrane pass occupies residues 96 to 116 (FPIYVLGQFLGSFLAAATTYL). Over 117–151 (IFYGAINHYAGGELLVTGPKSTANIFATYLPEHMT) the chain is Extracellular. Residues 152-172 (LWRGFVDEVFVTGMLQLCIFA) form a helical membrane-spanning segment. At 173–184 (ITDKLNSPALQG) the chain is on the cytoplasmic side. The chain crosses the membrane as a helical span at residues 185 to 201 (TEPLMIGILVCVLGVSL). At 202–205 (GMNT) the chain is on the extracellular side. The segment at residues 206-219 (GYAINPSRDLPPRF) is an intramembrane region (discontinuously helical). Positions 210-212 (NPS) match the NPA 2 motif. Residues 220–237 (FTFIAGWGKKVFSAGNNW) lie on the Extracellular side of the membrane. The helical transmembrane segment at 238–259 (WWVPVVAPLLGAYLGGIVYLGL) threads the bilayer. Over 260–269 (IHAGIPPQGS) the chain is Cytoplasmic.

Belongs to the MIP/aquaporin (TC 1.A.8) family. As to quaternary structure, homotetramer; each monomer provides an independent glycerol/water pore. Two homotetramers on opposing membranes can dimerize, forming a cell-cell junction. Interacts with PLIN1. In terms of processing, phosphorylation by PKA could prevent the interaction with PLIN1. Detected in heart, kidney and testis.

Its subcellular location is the cell membrane. The protein localises to the cytoplasmic vesicle membrane. It is found in the lipid droplet. The catalysed reaction is glycerol(in) = glycerol(out). It carries out the reaction H2O(in) = H2O(out). The enzyme catalyses urea(in) = urea(out). Glycerol transport is regulated by pH, with the porin being permeable to glycerol at pH 7.4 but not at pH 5.5. Water permeability, however, is not influenced by pH. Not inhibited by mercury ions. Aquaglyceroporins form homotetrameric transmembrane channels, with each monomer independently mediating glycerol and water transport across the plasma membrane along their osmotic gradient. Could also be permeable to urea. Mediates the efflux of glycerol, formed upon triglyceride hydrolysis, to avoid its accumulation in adipocytes and to make it available to other tissues. In the kidney, mediates the reabsorption of glycerol, preventing its loss in urine, again participating to energy homeostasis. In pancreatic beta cells, it also mediates the efflux of glycerol, regulating its intracellular levels. The sequence is that of Aquaporin-7 from Rattus norvegicus (Rat).